Consider the following 685-residue polypeptide: MAMKARLESVLNVGLRIPSIMLLEVLYRWDVSSFFQKIQRSSLNNNPVFQYKYIALYLHYVGYILSLVLLTLPRQHLVQLYLYVLTALLLFAGHQLSRDYVRGELDSGYEGPLYLEPLSMNRFTTALIGQVVVCTLCSCVMQTRQIWLFSAHLLPLVARLCLVPLETIVFINRFAMIFTGLEVLYFIASNLLVPYNLAKTAYRELVQVVEVYGLLALGMSLWNQLVLPVLFMCFWLVLFALQIYTYFSTRDQPPSRERLLFLFLTSIAECCSTPYSLLGLVFTVSFVALGVLTLCKFYLQGYRAFMNDNAMHRGMTEGITLLILAVQTGLIELQVIHRAFLLSIILFIVVASILQSMLEIADPIVLALGASRDKSLWKHFRAVSLCLFLLVFPAYMAYMICQFFRMDFWLLIIISSSILTSLQVLGTLLIYVLFMVEEFRKAPVENMDEVIYYVNGTYRLLEFLVAVCVVAYGVSETLFGEWTVMGSTIILVHSYYNVWLRAQLGWQSFLLRRDAVHKIQSMPTASTLQLQQHNDICSICFQDMKSAVITPCSHFFHAACLKKWLYVQETCPLCHGQLKSQLQPTSSPGTPTQGTPAANQNPREVEQEQRQPQVELNTEEGIRAEEMKTSAEQKLGMDLLPGSLNTQPKECDLVAEGSAGTASNLKGDDYYDDDDVSTSDVNCAS.

The next 13 helical transmembrane spans lie at 53-73 (YIALYLHYVGYILSLVLLTLP), 77-97 (LVQLYLYVLTALLLFAGHQLS), 123-143 (FTTALIGQVVVCTLCSCVMQT), 151-171 (AHLLPLVARLCLVPLETIVFI), 174-194 (FAMIFTGLEVLYFIASNLLVP), 225-245 (LVLPVLFMCFWLVLFALQIYT), 275-295 (YSLLGLVFTVSFVALGVLTLC), 316-336 (TEGITLLILAVQTGLIELQVI), 340-360 (FLLSIILFIVVASILQSMLEI), 384-404 (SLCLFLLVFPAYMAYMICQFF), 410-430 (LLIIISSSILTSLQVLGTLLI), 460-480 (LLEFLVAVCVVAYGVSETLFG), and 482-502 (WTVMGSTIILVHSYYNVWLRA). The segment at 537–575 (CSICFQDMKSAVITPCSHFFHAACLKKWLYVQETCPLCH) adopts an RING-type; atypical zinc-finger fold. The interval 582–685 (LQPTSSPGTP…VSTSDVNCAS (104 aa)) is disordered. Residues 583-602 (QPTSSPGTPTQGTPAANQNP) show a composition bias toward low complexity. The segment covering 620–631 (EGIRAEEMKTSA) has biased composition (basic and acidic residues).

The protein resides in the membrane. This chain is RING finger protein 145 (rnf145), found in Danio rerio (Zebrafish).